We begin with the raw amino-acid sequence, 217 residues long: Small ribosomal subunit protein uS3 (217 aa).

The KH type-2 domain occupies 38 to 106 (IRKFLKKRLS…KVTLDIQEVR (69 aa)).

Belongs to the universal ribosomal protein uS3 family. In terms of assembly, part of the 30S ribosomal subunit. Forms a tight complex with proteins S10 and S14.

In terms of biological role, binds the lower part of the 30S subunit head. Binds mRNA in the 70S ribosome, positioning it for translation. The chain is Small ribosomal subunit protein uS3 from Desulfotalea psychrophila (strain LSv54 / DSM 12343).